Here is a 208-residue protein sequence, read N- to C-terminus: Uracil phosphoribosyltransferase (208 aa).

5-phospho-alpha-D-ribose 1-diphosphate contacts are provided by residues R78, R103, and 130-138 (DPMFATGGT). Uracil-binding positions include I193 and 198-200 (GDA). D199 contacts 5-phospho-alpha-D-ribose 1-diphosphate.

The protein belongs to the UPRTase family. Mg(2+) is required as a cofactor.

It carries out the reaction UMP + diphosphate = 5-phospho-alpha-D-ribose 1-diphosphate + uracil. The protein operates within pyrimidine metabolism; UMP biosynthesis via salvage pathway; UMP from uracil: step 1/1. Its activity is regulated as follows. Allosterically activated by GTP. Functionally, catalyzes the conversion of uracil and 5-phospho-alpha-D-ribose 1-diphosphate (PRPP) to UMP and diphosphate. This Campylobacter jejuni (strain RM1221) protein is Uracil phosphoribosyltransferase.